The following is a 276-amino-acid chain: Undecaprenyl-diphosphatase (276 aa).

The next 8 helical transmembrane spans lie at 1–21 (MHWL…FLPV), 41–61 (LLLD…VFFA), 97–117 (ALLI…FHKI), 121–141 (LFAS…LLWA), 155–175 (VTWG…LPGI), 200–220 (FLLS…DASA), 231–251 (LGGI…LAIV), and 256–276 (LWWF…ANFV).

This sequence belongs to the UppP family.

The protein resides in the cell inner membrane. The enzyme catalyses di-trans,octa-cis-undecaprenyl diphosphate + H2O = di-trans,octa-cis-undecaprenyl phosphate + phosphate + H(+). Its function is as follows. Catalyzes the dephosphorylation of undecaprenyl diphosphate (UPP). Confers resistance to bacitracin. The polypeptide is Undecaprenyl-diphosphatase (Desulfatibacillum aliphaticivorans).